The sequence spans 397 residues: Succinate--CoA ligase [ADP-forming] subunit beta (397 aa).

An ATP-grasp domain is found at 9–254 (KALLKGYGAP…ETEEDAKEIE (246 aa)). ATP-binding positions include Lys46, 53–55 (GRG), Glu109, Ala112, and Glu117. Positions 209 and 223 each coordinate Mg(2+). Substrate-binding positions include Asn274 and 331–333 (GIM).

Belongs to the succinate/malate CoA ligase beta subunit family. Heterotetramer of two alpha and two beta subunits. Mg(2+) serves as cofactor.

The catalysed reaction is succinate + ATP + CoA = succinyl-CoA + ADP + phosphate. It catalyses the reaction GTP + succinate + CoA = succinyl-CoA + GDP + phosphate. It functions in the pathway carbohydrate metabolism; tricarboxylic acid cycle; succinate from succinyl-CoA (ligase route): step 1/1. Its function is as follows. Succinyl-CoA synthetase functions in the citric acid cycle (TCA), coupling the hydrolysis of succinyl-CoA to the synthesis of either ATP or GTP and thus represents the only step of substrate-level phosphorylation in the TCA. The beta subunit provides nucleotide specificity of the enzyme and binds the substrate succinate, while the binding sites for coenzyme A and phosphate are found in the alpha subunit. The protein is Succinate--CoA ligase [ADP-forming] subunit beta of Rhizobium etli (strain CIAT 652).